Reading from the N-terminus, the 364-residue chain is tRNA 2-selenouridine synthase (364 aa).

The Rhodanese domain maps to 14-137; it reads LIADTPIIDV…LRQTAIQATI (124 aa). The active-site S-selanylcysteine intermediate is the C97.

The protein belongs to the SelU family. Monomer.

The enzyme catalyses 5-methylaminomethyl-2-thiouridine(34) in tRNA + selenophosphate + (2E)-geranyl diphosphate + H2O + H(+) = 5-methylaminomethyl-2-selenouridine(34) in tRNA + (2E)-thiogeraniol + phosphate + diphosphate. It catalyses the reaction 5-methylaminomethyl-2-thiouridine(34) in tRNA + (2E)-geranyl diphosphate = 5-methylaminomethyl-S-(2E)-geranyl-thiouridine(34) in tRNA + diphosphate. It carries out the reaction 5-methylaminomethyl-S-(2E)-geranyl-thiouridine(34) in tRNA + selenophosphate + H(+) = 5-methylaminomethyl-2-(Se-phospho)selenouridine(34) in tRNA + (2E)-thiogeraniol. The catalysed reaction is 5-methylaminomethyl-2-(Se-phospho)selenouridine(34) in tRNA + H2O = 5-methylaminomethyl-2-selenouridine(34) in tRNA + phosphate. Involved in the post-transcriptional modification of the uridine at the wobble position (U34) of tRNA(Lys), tRNA(Glu) and tRNA(Gln). Catalyzes the conversion of 2-thiouridine (S2U-RNA) to 2-selenouridine (Se2U-RNA). Acts in a two-step process involving geranylation of 2-thiouridine (S2U) to S-geranyl-2-thiouridine (geS2U) and subsequent selenation of the latter derivative to 2-selenouridine (Se2U) in the tRNA chain. This Escherichia coli O45:K1 (strain S88 / ExPEC) protein is tRNA 2-selenouridine synthase.